The primary structure comprises 442 residues: Histidinol dehydrogenase (442 aa).

Positions 1 to 20 are disordered; the sequence is MLNVTDLRGQTPSKSDIRRA. NAD(+) is bound by residues Y129, Q193, and N218. Substrate is bound by residues T241, Q263, and H266. Zn(2+)-binding residues include Q263 and H266. Active-site proton acceptor residues include E332 and H333. Substrate-binding residues include H333, D366, E420, and H425. Zn(2+) is bound at residue D366. Zn(2+) is bound at residue H425.

Belongs to the histidinol dehydrogenase family. Zn(2+) is required as a cofactor.

It carries out the reaction L-histidinol + 2 NAD(+) + H2O = L-histidine + 2 NADH + 3 H(+). Its pathway is amino-acid biosynthesis; L-histidine biosynthesis; L-histidine from 5-phospho-alpha-D-ribose 1-diphosphate: step 9/9. Its function is as follows. Catalyzes the sequential NAD-dependent oxidations of L-histidinol to L-histidinaldehyde and then to L-histidine. The sequence is that of Histidinol dehydrogenase from Corynebacterium glutamicum (strain ATCC 13032 / DSM 20300 / JCM 1318 / BCRC 11384 / CCUG 27702 / LMG 3730 / NBRC 12168 / NCIMB 10025 / NRRL B-2784 / 534).